The following is a 266-amino-acid chain: Streptomycin 3''-kinase (266 aa).

The Proton acceptor role is filled by D154.

The protein belongs to the aminoglycoside phosphotransferase family.

The catalysed reaction is streptomycin + ATP = streptomycin 3''-phosphate + ADP + H(+). In terms of biological role, the aminoglycoside phosphotransferases achieve inactivation of their antibiotic substrates by phosphorylation. In Klebsiella pneumoniae, this protein is Streptomycin 3''-kinase (str).